Here is a 398-residue protein sequence, read N- to C-terminus: Succinate--CoA ligase [ADP-forming] subunit beta (398 aa).

Residues 9-253 (KELLKSYGVA…EAEEDPKELE (245 aa)) form the ATP-grasp domain. ATP contacts are provided by residues Lys-46, 53–55 (GRG), Glu-108, Cys-111, and Glu-116. Mg(2+) is bound by residues Asn-208 and Asp-222. Residues Asn-273 and 330-332 (GIM) each bind substrate.

This sequence belongs to the succinate/malate CoA ligase beta subunit family. In terms of assembly, heterotetramer of two alpha and two beta subunits. Mg(2+) is required as a cofactor.

It catalyses the reaction succinate + ATP + CoA = succinyl-CoA + ADP + phosphate. It carries out the reaction GTP + succinate + CoA = succinyl-CoA + GDP + phosphate. It functions in the pathway carbohydrate metabolism; tricarboxylic acid cycle; succinate from succinyl-CoA (ligase route): step 1/1. Succinyl-CoA synthetase functions in the citric acid cycle (TCA), coupling the hydrolysis of succinyl-CoA to the synthesis of either ATP or GTP and thus represents the only step of substrate-level phosphorylation in the TCA. The beta subunit provides nucleotide specificity of the enzyme and binds the substrate succinate, while the binding sites for coenzyme A and phosphate are found in the alpha subunit. The chain is Succinate--CoA ligase [ADP-forming] subunit beta from Acidiphilium cryptum (strain JF-5).